A 518-amino-acid polypeptide reads, in one-letter code: Glutamate--cysteine ligase (518 aa).

This sequence belongs to the glutamate--cysteine ligase type 1 family. Type 1 subfamily.

The catalysed reaction is L-cysteine + L-glutamate + ATP = gamma-L-glutamyl-L-cysteine + ADP + phosphate + H(+). Its pathway is sulfur metabolism; glutathione biosynthesis; glutathione from L-cysteine and L-glutamate: step 1/2. In Escherichia coli O127:H6 (strain E2348/69 / EPEC), this protein is Glutamate--cysteine ligase.